Consider the following 212-residue polypeptide: SOSS complex subunit B1 (212 aa).

Positions 22 to 92 (IVLETGRVTK…TLYTGRGGDL (71 aa)) form a DNA-binding region, OB. The interval 110-212 (EPNPEYNTQQ…GKETRRSSKR (103 aa)) is disordered. Residues 114 to 130 (EYNTQQAPNKSVQNNDN) show a composition bias toward polar residues. T117 carries the phosphothreonine; by ATM modification. Residues 131–148 (SPTAPQATTGPPAASPAS) show a composition bias toward low complexity. The span at 149 to 160 (ENQNGNGLSTQL) shows a compositional bias: polar residues. Positions 166-178 (PHPSHTPSHPPST) are enriched in low complexity.

It belongs to the SOSS-B family. SOSS-B1 subfamily. As to quaternary structure, component of the SOSS complex, composed of SOSS-B (SOSS-B1/NABP2 or SOSS-B2/NABP1), SOSS-A/INTS3 and SOSS-C/INIP. SOSS complexes containing SOSS-B1/NABP2 are more abundant than complexes containing SOSS-B2/NABP1. Directly interacts with ATM, SOSS-A/INTS3 and RAD51. Interacts with INTS7. Phosphorylated by ATM in response to DNA damage. Phosphorylation prevents degradation by the proteasome, hence stabilization of the protein and accumulation within cells. Post-translationally, ubiquitinated in a FBXL5-dependent manner, leading to proteasomal degradation.

It is found in the nucleus. In terms of biological role, component of the SOSS complex, a multiprotein complex that functions downstream of the MRN complex to promote DNA repair and G2/M checkpoint. In the SOSS complex, acts as a sensor of single-stranded DNA that binds to single-stranded DNA, in particular to polypyrimidines. The SOSS complex associates with DNA lesions and influences diverse endpoints in the cellular DNA damage response including cell-cycle checkpoint activation, recombinational repair and maintenance of genomic stability. Required for efficient homologous recombination-dependent repair of double-strand breaks (DSBs) and ATM-dependent signaling pathways. This is SOSS complex subunit B1 (Nabp2) from Mus musculus (Mouse).